Here is a 258-residue protein sequence, read N- to C-terminus: L-fucose dehydrogenase (258 aa).

The NADP(+) site is built by serine 17, isoleucine 19, arginine 39, histidine 40, glutamate 63, leucine 64, and asparagine 90. Beta-L-fucose contacts are provided by asparagine 94, serine 140, lysine 141, glutamine 147, and tyrosine 153. Positions 153 and 157 each coordinate NADP(+). Catalysis depends on tyrosine 153, which acts as the Proton acceptor. Beta-L-fucose-binding residues include alanine 184 and glutamate 185. The NADP(+) site is built by valine 186 and threonine 188.

Belongs to the short-chain dehydrogenases/reductases (SDR) family. In terms of assembly, homotetramer; dimer of dimers.

It carries out the reaction beta-L-fucose + NADP(+) = L-fucono-1,5-lactone + NADPH + H(+). It catalyses the reaction D-arabinose + NADP(+) = D-arabinono-1,5-lactone + NADPH + H(+). It participates in carbohydrate degradation; L-fucose degradation. Its function is as follows. L-fucose dehydrogenase involved in an L-fucose degradation pathway. Catalyzes the oxidation of L-fucose to L-fucono-1,5-lactone. Can also act on D-arabinose, with lower catalytic efficiency, and has weak activity with L-galactose and 4-deoxy-L-fucose. Shows a preference for NADP(+) over NAD(+). This chain is L-fucose dehydrogenase, found in Burkholderia multivorans (strain ATCC 17616 / 249).